The sequence spans 86 residues: Electron transfer flavoprotein regulatory factor 1 (86 aa).

The protein belongs to the complex I LYR family. As to quaternary structure, homotetramer. Interacts with NDUFAB1. Interacts with ETFA. Interacts with ETFB.

It localises to the mitochondrion. Its function is as follows. Acts as a regulator of the electron transfer flavoprotein by promoting the removal of flavin from the ETF holoenzyme (composed of ETFA and ETFB). This Mus musculus (Mouse) protein is Electron transfer flavoprotein regulatory factor 1.